The following is a 77-amino-acid chain: Acyl carrier protein (77 aa).

Positions 1–77 constitute a Carrier domain; the sequence is MSVEAKVKKI…DAIEYIRKKS (77 aa). At serine 37 the chain carries O-(pantetheine 4'-phosphoryl)serine.

It belongs to the acyl carrier protein (ACP) family. 4'-phosphopantetheine is transferred from CoA to a specific serine of apo-ACP by AcpS. This modification is essential for activity because fatty acids are bound in thioester linkage to the sulfhydryl of the prosthetic group.

Its subcellular location is the cytoplasm. It functions in the pathway lipid metabolism; fatty acid biosynthesis. Functionally, carrier of the growing fatty acid chain in fatty acid biosynthesis. This chain is Acyl carrier protein, found in Desulforapulum autotrophicum (strain ATCC 43914 / DSM 3382 / VKM B-1955 / HRM2) (Desulfobacterium autotrophicum).